The primary structure comprises 313 residues: D-alanine--D-alanine ligase (313 aa).

An ATP-grasp domain is found at 108–308 (KLVWQQTGVP…YSELVVKVLS (201 aa)). ATP is bound at residue 138-193 (VAKLGLPLFVKPASEGSSVAVLKVKTADALPAALEEAATHDKIVIVEKSIEGGGEY). Mg(2+) is bound by residues aspartate 262, glutamate 275, and asparagine 277.

This sequence belongs to the D-alanine--D-alanine ligase family. Mg(2+) is required as a cofactor. Mn(2+) serves as cofactor.

Its subcellular location is the cytoplasm. The catalysed reaction is 2 D-alanine + ATP = D-alanyl-D-alanine + ADP + phosphate + H(+). Its pathway is cell wall biogenesis; peptidoglycan biosynthesis. In terms of biological role, cell wall formation. The sequence is that of D-alanine--D-alanine ligase from Burkholderia cenocepacia (strain ATCC BAA-245 / DSM 16553 / LMG 16656 / NCTC 13227 / J2315 / CF5610) (Burkholderia cepacia (strain J2315)).